A 347-amino-acid polypeptide reads, in one-letter code: Secretory carrier-associated membrane protein 3 (347 aa).

The segment at 1–88 (MAQSRDGGNP…EPKNYGSYST (88 aa)) is disordered. Residues 1-170 (MAQSRDGGNP…QKTVSTMYYL (170 aa)) lie on the Cytoplasmic side of the membrane. S32 is subject to Phosphoserine. Residue T37 is modified to Phosphothreonine. 2 positions are modified to phosphotyrosine: Y41 and Y53. Over residues 49-66 (PPPAYEPPAPAPLPPPSA) the composition is skewed to pro residues. S72 and S76 each carry phosphoserine. Y83 bears the Phosphotyrosine mark. S85 carries the phosphoserine modification. The next 4 membrane-spanning stretches (helical) occupy residues 171-191 (WMCS…SFCV), 197-217 (AGFG…FVCW), 247-267 (FVLQ…SALV), and 277-297 (VLML…IVML). Over 298-347 (KRIHSLYRRTGASFQKAQQEFAAGVFSNPAVRTAAANAAAGAAENAFRAP) the chain is Cytoplasmic. A Glycyl lysine isopeptide (Lys-Gly) (interchain with G-Cter in SUMO1) cross-link involves residue K313.

This sequence belongs to the SCAMP family. Interacts with NEDD4, NEDD4L and TSG101. Interacts with RNF126. Monoubiquitinated. As to expression, widely expressed, with highest expression in heart and skeletal muscle.

The protein resides in the membrane. Its function is as follows. Functions in post-Golgi recycling pathways. Acts as a recycling carrier to the cell surface. This is Secretory carrier-associated membrane protein 3 (SCAMP3) from Homo sapiens (Human).